The sequence spans 145 residues: Maximins 5/H4 type 1 (145 aa).

Residues 1–18 form the signal peptide; that stretch reads MNFKYIVAVSFLIASAYA. Propeptides lie at residues 19 to 43 and 74 to 124; these read RSVQ…REIR and TAEE…KEKR. Leu-144 carries the post-translational modification Leucine amide.

Belongs to the bombinin family. In terms of tissue distribution, expressed by the skin glands.

Its subcellular location is the secreted. Its function is as follows. Maximin-5 shows antibacterial activity against both Gram-positive and Gram-negative bacteria. The only exception is the resistance of E.coli. Also shows antimicrobial activity against fungi C.albicans, A.flavus and P.uticale. It has little hemolytic activity. It does not possess a significant cytotoxicity against tumor cell lines. It does not possess a significant anti-HIV activity. Functionally, maximin-H4 shows antibacterial activity against both Gram-positive and Gram-negative bacteria. It also shows antimicrobial activity against the fungus C.albicans. Shows strong hemolytic activity. This is Maximins 5/H4 type 1 from Bombina maxima (Giant fire-bellied toad).